The primary structure comprises 414 residues: MEKRRVVITGLGVVSPLGNKVSDMWQALLAGKSGVKPITRFDASSFPTQIAAEVRDFDPALVLDLKSIRKTDVFVQFAMESARQAWEDSGLEINETNAPRVGVAIGSGIGGMPWIEKNYDALLTSGPRKISPFFIPGAIINMASGMVSIKYDLKGPNISIVTACTTGLHNIGHAARMIAHNDADAMIAGGTEMASTPLGIGGFAAVRALSTRNDEPEKASRPWDKGRDGFVLGEGAACVVVEELEHAKKRNATIYAEIIGFGMSGDAYHMTRPDPEAEGFTTCMKNSLRDAGIAPERVDYINAHGTSTPAADPLEARAIKKTFGDHAYKLAVSSTKSMTGHMLGAAGALETVISVLAIRDNTAPPTINLENPDEGCDLDFVPNEAREMKIDTVMSNSFGFGGTNGTLVLSRVFD.

The 409-residue stretch at 3–411 (KRRVVITGLG…GTNGTLVLSR (409 aa)) folds into the Ketosynthase family 3 (KS3) domain. Catalysis depends on for beta-ketoacyl synthase activity residues cysteine 164, histidine 304, and histidine 341.

It belongs to the thiolase-like superfamily. Beta-ketoacyl-ACP synthases family. As to quaternary structure, homodimer.

It carries out the reaction a fatty acyl-[ACP] + malonyl-[ACP] + H(+) = a 3-oxoacyl-[ACP] + holo-[ACP] + CO2. It catalyses the reaction (9Z)-hexadecenoyl-[ACP] + malonyl-[ACP] + H(+) = 3-oxo-(11Z)-octadecenoyl-[ACP] + holo-[ACP] + CO2. It functions in the pathway lipid metabolism; fatty acid biosynthesis. Involved in the type II fatty acid elongation cycle. Catalyzes the elongation of a wide range of acyl-ACP by the addition of two carbons from malonyl-ACP to an acyl acceptor. Can efficiently catalyze the conversion of palmitoleoyl-ACP (cis-hexadec-9-enoyl-ACP) to cis-vaccenoyl-ACP (cis-octadec-11-enoyl-ACP), an essential step in the thermal regulation of fatty acid composition. This is 3-oxoacyl-[acyl-carrier-protein] synthase 2 (fabF) from Coxiella burnetii (strain RSA 493 / Nine Mile phase I).